The primary structure comprises 185 residues: Ribosome-recycling factor (185 aa).

Belongs to the RRF family.

It is found in the cytoplasm. Functionally, responsible for the release of ribosomes from messenger RNA at the termination of protein biosynthesis. May increase the efficiency of translation by recycling ribosomes from one round of translation to another. This is Ribosome-recycling factor from Haemophilus ducreyi (strain 35000HP / ATCC 700724).